The following is a 991-amino-acid chain: Translation initiation factor IF-2 (991 aa).

3 disordered regions span residues 53 to 85, 97 to 175, and 312 to 395; these read SHGTSGADRKKITLTKKSTSEIKQADASGKART, VKRD…EAAE, and GIKG…DRGG. Composition is skewed to basic and acidic residues over residues 97 to 113 and 125 to 175; these read VKRDDPTGASSESHDSQ and ELQR…EAAE. Low complexity predominate over residues 323–338; the sequence is AAGAPAPGAAPGAAAK. The span at 339–349 shows a compositional bias: basic and acidic residues; sequence PGEKKSVKSEK. The 168-residue stretch at 491–658 folds into the tr-type G domain; it reads PRPPVVTVMG…QVLLQAEVLE (168 aa). The segment at 500-507 is G1; the sequence is GHVDHGKT. 500 to 507 provides a ligand contact to GTP; the sequence is GHVDHGKT. Residues 525–529 form a G2 region; it reads GITQH. The G3 stretch occupies residues 546 to 549; sequence DTPG. GTP contacts are provided by residues 546 to 550 and 600 to 603; these read DTPGH and NKID. Positions 600-603 are G4; sequence NKID. The G5 stretch occupies residues 636–638; it reads SAK.

This sequence belongs to the TRAFAC class translation factor GTPase superfamily. Classic translation factor GTPase family. IF-2 subfamily.

It is found in the cytoplasm. In terms of biological role, one of the essential components for the initiation of protein synthesis. Protects formylmethionyl-tRNA from spontaneous hydrolysis and promotes its binding to the 30S ribosomal subunits. Also involved in the hydrolysis of GTP during the formation of the 70S ribosomal complex. This chain is Translation initiation factor IF-2, found in Leptothrix cholodnii (strain ATCC 51168 / LMG 8142 / SP-6) (Leptothrix discophora (strain SP-6)).